Here is a 130-residue protein sequence, read N- to C-terminus: Small ribosomal subunit protein uS8x (130 aa).

The protein belongs to the universal ribosomal protein uS8 family.

In Arabidopsis thaliana (Mouse-ear cress), this protein is Small ribosomal subunit protein uS8x (RPS15AD).